The primary structure comprises 200 residues: MAKFTQHTGLVVPLDAANVDTDAIIPKQFLQKVTRTGFGKHLFNDWRFLDDAGQQPNPEFVLNKPRYKGASILLARENFGCGSSREHAPWALTDYGFRVVIAPSFADIFYGNSLNNQLLPVKLSEQDVETLFQLVAANEGIEFEVDLENQTVKAGGKSYPFDIDSFRRHCMINGLDSIGLTLQHEADISRYEAQQPAFLN.

Belongs to the LeuD family. LeuD type 1 subfamily. As to quaternary structure, heterodimer of LeuC and LeuD.

The enzyme catalyses (2R,3S)-3-isopropylmalate = (2S)-2-isopropylmalate. The protein operates within amino-acid biosynthesis; L-leucine biosynthesis; L-leucine from 3-methyl-2-oxobutanoate: step 2/4. Functionally, catalyzes the isomerization between 2-isopropylmalate and 3-isopropylmalate, via the formation of 2-isopropylmaleate. This is 3-isopropylmalate dehydratase small subunit from Serratia proteamaculans (strain 568).